The chain runs to 117 residues: MQKSCEENEGKPQNMPKAEEDRPLEDVPQEAEGNPQPSEEGVSQEAEGNPRGGPNQPGQGFKEDTPVRHLDPEEMIRGVDELERLREEIRRVRNKFVMMHWKQRHSRSRPYPVCFRP.

Composition is skewed to basic and acidic residues over residues 1–10 (MQKSCEENEG) and 61–75 (FKED…PEEM). Residues 1–75 (MQKSCEENEG…PVRHLDPEEM (75 aa)) are disordered. Residues 73 to 100 (EEMIRGVDELERLREEIRRVRNKFVMMH) are a coiled coil.

It belongs to the TFS-II family. TFA subfamily.

The protein resides in the nucleus. Its function is as follows. May be involved in transcriptional regulation. This Homo sapiens (Human) protein is Transcription elongation factor A protein-like 8 (TCEAL8).